Reading from the N-terminus, the 842-residue chain is Elongation factor 2 (842 aa).

The 237-residue stretch at 17-253 (SNVRNMSVIA…LWGENYFNPK (237 aa)) folds into the tr-type G domain. Residues 26 to 33 (AHVDHGKS), 104 to 108 (DSPGH), and 158 to 161 (NKVD) contribute to the GTP site. A Phosphoserine modification is found at S568. T574 bears the Phosphothreonine mark. A Diphthamide modification is found at H699.

This sequence belongs to the TRAFAC class translation factor GTPase superfamily. Classic translation factor GTPase family. EF-G/EF-2 subfamily.

It localises to the cytoplasm. Functionally, catalyzes the GTP-dependent ribosomal translocation step during translation elongation. During this step, the ribosome changes from the pre-translocational (PRE) to the post-translocational (POST) state as the newly formed A-site-bound peptidyl-tRNA and P-site-bound deacylated tRNA move to the P and E sites, respectively. Catalyzes the coordinated movement of the two tRNA molecules, the mRNA and conformational changes in the ribosome. The protein is Elongation factor 2 (eft201) of Schizosaccharomyces pombe (strain 972 / ATCC 24843) (Fission yeast).